The primary structure comprises 179 residues: tRNA-splicing endonuclease (179 aa).

Catalysis depends on residues Tyr115, His123, and Lys154.

It belongs to the tRNA-intron endonuclease family. Archaeal short subfamily. As to quaternary structure, homotetramer; although the tetramer contains four active sites, only two participate in the cleavage. Therefore, it should be considered as a dimer of dimers.

It catalyses the reaction pretRNA = a 3'-half-tRNA molecule with a 5'-OH end + a 5'-half-tRNA molecule with a 2',3'-cyclic phosphate end + an intron with a 2',3'-cyclic phosphate and a 5'-hydroxyl terminus.. Endonuclease that removes tRNA introns. Cleaves pre-tRNA at the 5'- and 3'-splice sites to release the intron. The products are an intron and two tRNA half-molecules bearing 2',3' cyclic phosphate and 5'-OH termini. Recognizes a pseudosymmetric substrate in which 2 bulged loops of 3 bases are separated by a stem of 4 bp. This is tRNA-splicing endonuclease from Methanopyrus kandleri (strain AV19 / DSM 6324 / JCM 9639 / NBRC 100938).